The chain runs to 355 residues: 45 kDa calcium-binding protein (355 aa).

The first 29 residues, 1 to 29, serve as a signal peptide directing secretion; that stretch reads MASRQAPLCGLAPCCLWLLGVVLLMNASA. A glycan (N-linked (GlcNAc...) asparagine) is linked at Asn-33. EF-hand domains follow at residues 91–126 and 130–165; these read KSRRKLMVIFSKVDLNTDRRISAKEMQKWIMQKTAE and EAVAESRAHFRAVDPDGDGHVSWDEYKVKFLATKGH. Ser-92 is subject to Phosphoserine. 10 residues coordinate Ca(2+): Asp-104, Asn-106, Asp-108, Arg-110, Glu-115, Asp-143, Asp-145, Asp-147, His-149, and Glu-154. Residues Thr-186 and Thr-210 each carry the phosphothreonine modification. EF-hand domains lie at 226–261, 271–306, and 307–342; these read MLQFMVKEIIRDLDQDGDKKLSLSEFISLPVGTVEN, WVRDRKREFEELIDANHDGIVTMAELEDYMDPMNEF, and SALNEAKQMIAIADENQNHYLEPEEVLKYSEFFTGS. The Ca(2+) site is built by Asp-239, Asp-241, Asp-243, Lys-245, and Glu-250. Residue Thr-258 is modified to Phosphothreonine. Positions 284, 286, and 288 each coordinate Ca(2+). Phosphothreonine is present on Thr-292. Ca(2+) is bound by residues Glu-295, Asp-320, Asn-322, Asn-324, Tyr-326, and Glu-331. The necessary for intracellular retention in Golgi apparatus lumen stretch occupies residues 302-355; it reads PMNEFSALNEAKQMIAIADENQNHYLEPEEVLKYSEFFTGSKLVDYARSVHEEF.

The protein belongs to the CREC family.

The protein localises to the golgi apparatus lumen. In terms of biological role, may regulate calcium-dependent activities in the endoplasmic reticulum lumen or post-ER compartment. This Bos taurus (Bovine) protein is 45 kDa calcium-binding protein (SDF4).